A 345-amino-acid polypeptide reads, in one-letter code: UDP-3-O-acylglucosamine N-acyltransferase (345 aa).

The active-site Proton acceptor is the histidine 253.

Belongs to the transferase hexapeptide repeat family. LpxD subfamily. In terms of assembly, homotrimer.

The catalysed reaction is a UDP-3-O-[(3R)-3-hydroxyacyl]-alpha-D-glucosamine + a (3R)-hydroxyacyl-[ACP] = a UDP-2-N,3-O-bis[(3R)-3-hydroxyacyl]-alpha-D-glucosamine + holo-[ACP] + H(+). Its pathway is bacterial outer membrane biogenesis; LPS lipid A biosynthesis. Catalyzes the N-acylation of UDP-3-O-acylglucosamine using 3-hydroxyacyl-ACP as the acyl donor. Is involved in the biosynthesis of lipid A, a phosphorylated glycolipid that anchors the lipopolysaccharide to the outer membrane of the cell. This Rickettsia massiliae (strain Mtu5) protein is UDP-3-O-acylglucosamine N-acyltransferase.